The following is an 89-amino-acid chain: Large ribosomal subunit protein bL27 (89 aa).

The disordered stretch occupies residues 1–24 (MAHKKAGGSSRNGRDSDGRRLGVK).

Belongs to the bacterial ribosomal protein bL27 family.

The polypeptide is Large ribosomal subunit protein bL27 (Azorhizobium caulinodans (strain ATCC 43989 / DSM 5975 / JCM 20966 / LMG 6465 / NBRC 14845 / NCIMB 13405 / ORS 571)).